The primary structure comprises 428 residues: Enolase 1 (428 aa).

Residue Gln167 participates in (2R)-2-phosphoglycerate binding. The active-site Proton donor is the Glu209. Mg(2+) is bound by residues Asp246, Glu288, and Asp315. (2R)-2-phosphoglycerate-binding residues include Lys340, Arg369, Ser370, and Lys391. Residue Lys340 is the Proton acceptor of the active site.

The protein belongs to the enolase family. In terms of assembly, component of the RNA degradosome, a multiprotein complex involved in RNA processing and mRNA degradation. Requires Mg(2+) as cofactor.

The protein resides in the cytoplasm. Its subcellular location is the secreted. The protein localises to the cell surface. The catalysed reaction is (2R)-2-phosphoglycerate = phosphoenolpyruvate + H2O. The protein operates within carbohydrate degradation; glycolysis; pyruvate from D-glyceraldehyde 3-phosphate: step 4/5. Functionally, catalyzes the reversible conversion of 2-phosphoglycerate (2-PG) into phosphoenolpyruvate (PEP). It is essential for the degradation of carbohydrates via glycolysis. The chain is Enolase 1 from Pseudomonas syringae pv. syringae (strain B728a).